We begin with the raw amino-acid sequence, 302 residues long: Nucleotide-binding protein SE_0548 (302 aa).

Position 18 to 25 (18 to 25 (GMSGAGKS)) interacts with ATP. A GTP-binding site is contributed by 69–72 (DLRG).

It belongs to the RapZ-like family.

Displays ATPase and GTPase activities. In Staphylococcus epidermidis (strain ATCC 12228 / FDA PCI 1200), this protein is Nucleotide-binding protein SE_0548.